A 204-amino-acid polypeptide reads, in one-letter code: Imidazoleglycerol-phosphate dehydratase (204 aa).

This sequence belongs to the imidazoleglycerol-phosphate dehydratase family.

The protein localises to the cytoplasm. The enzyme catalyses D-erythro-1-(imidazol-4-yl)glycerol 3-phosphate = 3-(imidazol-4-yl)-2-oxopropyl phosphate + H2O. The protein operates within amino-acid biosynthesis; L-histidine biosynthesis; L-histidine from 5-phospho-alpha-D-ribose 1-diphosphate: step 6/9. The sequence is that of Imidazoleglycerol-phosphate dehydratase from Corynebacterium jeikeium (strain K411).